The sequence spans 205 residues: Thiamine-phosphate synthase (205 aa).

4-amino-2-methyl-5-(diphosphooxymethyl)pyrimidine-binding positions include 37–41 and N69; that span reads QVREK. Residues D70 and D89 each contribute to the Mg(2+) site. S108 contributes to the 4-amino-2-methyl-5-(diphosphooxymethyl)pyrimidine binding site. Residue 134-136 coordinates 2-[(2R,5Z)-2-carboxy-4-methylthiazol-5(2H)-ylidene]ethyl phosphate; it reads TGS. A 4-amino-2-methyl-5-(diphosphooxymethyl)pyrimidine-binding site is contributed by K137. Residues G165 and 185–186 each bind 2-[(2R,5Z)-2-carboxy-4-methylthiazol-5(2H)-ylidene]ethyl phosphate; that span reads IS.

This sequence belongs to the thiamine-phosphate synthase family. Mg(2+) serves as cofactor.

It catalyses the reaction 2-[(2R,5Z)-2-carboxy-4-methylthiazol-5(2H)-ylidene]ethyl phosphate + 4-amino-2-methyl-5-(diphosphooxymethyl)pyrimidine + 2 H(+) = thiamine phosphate + CO2 + diphosphate. It carries out the reaction 2-(2-carboxy-4-methylthiazol-5-yl)ethyl phosphate + 4-amino-2-methyl-5-(diphosphooxymethyl)pyrimidine + 2 H(+) = thiamine phosphate + CO2 + diphosphate. The catalysed reaction is 4-methyl-5-(2-phosphooxyethyl)-thiazole + 4-amino-2-methyl-5-(diphosphooxymethyl)pyrimidine + H(+) = thiamine phosphate + diphosphate. Its pathway is cofactor biosynthesis; thiamine diphosphate biosynthesis; thiamine phosphate from 4-amino-2-methyl-5-diphosphomethylpyrimidine and 4-methyl-5-(2-phosphoethyl)-thiazole: step 1/1. Condenses 4-methyl-5-(beta-hydroxyethyl)thiazole monophosphate (THZ-P) and 2-methyl-4-amino-5-hydroxymethyl pyrimidine pyrophosphate (HMP-PP) to form thiamine monophosphate (TMP). The sequence is that of Thiamine-phosphate synthase from Clostridium botulinum (strain ATCC 19397 / Type A).